The sequence spans 435 residues: Adenylosuccinate synthetase (435 aa).

Residues 17–23 (GDEGKGK) and 47–49 (GHT) each bind GTP. The Proton acceptor role is filled by D18. Residues D18 and G47 each coordinate Mg(2+). IMP-binding positions include 18–21 (DEGK), 45–48 (NAGH), T138, R152, N232, T247, and R311. H48 functions as the Proton donor in the catalytic mechanism. 307 to 313 (VTTGRKR) lines the substrate pocket. GTP is bound by residues R313, 339 to 341 (KLD), and 421 to 423 (GVG).

The protein belongs to the adenylosuccinate synthetase family. Homodimer. Requires Mg(2+) as cofactor.

The protein localises to the cytoplasm. The enzyme catalyses IMP + L-aspartate + GTP = N(6)-(1,2-dicarboxyethyl)-AMP + GDP + phosphate + 2 H(+). The protein operates within purine metabolism; AMP biosynthesis via de novo pathway; AMP from IMP: step 1/2. Its function is as follows. Plays an important role in the de novo pathway and in the salvage pathway of purine nucleotide biosynthesis. Catalyzes the first committed step in the biosynthesis of AMP from IMP. The chain is Adenylosuccinate synthetase from Caenorhabditis briggsae.